The chain runs to 186 residues: Peptidyl-tRNA hydrolase (186 aa).

Tyr14 serves as a coordination point for tRNA. Residue His19 is the Proton acceptor of the active site. Residues Tyr61, Asn63, and Asn107 each coordinate tRNA.

Belongs to the PTH family. In terms of assembly, monomer.

It is found in the cytoplasm. The catalysed reaction is an N-acyl-L-alpha-aminoacyl-tRNA + H2O = an N-acyl-L-amino acid + a tRNA + H(+). Its function is as follows. Hydrolyzes ribosome-free peptidyl-tRNAs (with 1 or more amino acids incorporated), which drop off the ribosome during protein synthesis, or as a result of ribosome stalling. Catalyzes the release of premature peptidyl moieties from peptidyl-tRNA molecules trapped in stalled 50S ribosomal subunits, and thus maintains levels of free tRNAs and 50S ribosomes. In Helicobacter pylori (strain P12), this protein is Peptidyl-tRNA hydrolase.